The chain runs to 716 residues: Phospholipid phosphatase-related protein type 3 (716 aa).

Transmembrane regions (helical) follow at residues 18–38 (LPCF…SLYF), 70–90 (LIPL…SIMV), and 131–151 (FVGV…VIQL). Asn167 carries an N-linked (GlcNAc...) asparagine glycan. 3 helical membrane passes run 205–225 (HATL…SVIS), 231–251 (LKPI…LTQI), and 261–281 (VYAG…HAVG). Residues 311-334 (SMYQQNKSVSTDELGPPGRLEGVP) are disordered. Polar residues predominate over residues 312 to 321 (MYQQNKSVST). N-linked (GlcNAc...) asparagine glycosylation occurs at Asn316. 2 positions are modified to phosphoserine: Ser320 and Ser351. Position 374 is a phosphothreonine (Thr374). Positions 416-488 (GRGLGLPDEA…RVILPPRPGP (73 aa)) are disordered. Ser426 carries the phosphoserine modification. The segment covering 437–460 (VAEEEEEEEEEEEEEEEEEEEEEG) has biased composition (acidic residues). A Phosphoserine modification is found at Ser506. The tract at residues 548–589 (AMSKAAGGPKAETASSSSASSDSSQYRSPSDRDSASIVTIDA) is disordered. Positions 562–575 (SSSSASSDSSQYRS) are enriched in low complexity. Position 641 is a phosphoserine (Ser641). Positions 664-694 (GEGLPPPGASEGALGAGSRESTLRRQVGALG) are disordered.

The protein belongs to the PA-phosphatase related phosphoesterase family.

The protein resides in the membrane. This chain is Phospholipid phosphatase-related protein type 3, found in Rattus norvegicus (Rat).